The following is a 152-amino-acid chain: MTIWVDADACPNVIKEILYRAAERMQMPLVLVANQSLRVPPSRFIRTLRVAAGFDVADNEIVRQCEAGDLVITADIPLAAEAIEKGAAALNPRGERYTPATIRERLTMRDFMDTLRASGIQTGGPDSLSQRDRQAFAAELEKWWLEVQRSRG.

It belongs to the UPF0178 family.

This is UPF0178 protein YaiI from Escherichia coli O6:K15:H31 (strain 536 / UPEC).